Reading from the N-terminus, the 725-residue chain is MSAFSEAINSLFSGHYADPFSLLGMHHSSKGLEVRALLPDADAAWVVDASNGRKIVELERVDGRGFFCGLVPNRKHDFHYQLAVTWREETWVIEDPYRFGPLLQDMDIWLLAEGTHLRPYERLGAHLETLDGVEGTRFAVWAPNAQRVSVVGQFNFWDGRRHPMRLRKENGIWELFLPDVKAGQLYKYEMIDSHGSVRLKADPYAFEAQMRPDTASLITPLPEKVPTNEARREANSLRSPISIYEVHLGSWRRHTDNNFWLSYQELANQLIDYVQYMGFTHVELMPINEHPFDGSWGYQPLGLYAPTRRFGTASDFRAFVDALHGAGINVLLDWVPGHFPGDEYGLAQFDGTALYEYSDPREGYHQDWNTLIYNYGRHEVRNYLAGNALFWMERYGIDGLRVDAVASMIYRDYSRSEGEWVPNHYGGKENLEAIAFLRYTNHTLGHAAPAAITLAEESTDYPGVTLPPDCNGLGFHYKWNMGWMHDTLTYMQLDPVHRKHHHDLLTFGMLYAYSENFVLPLSHDEVVHGKRSLLDRMPGDVWQKFANLRAYYGFMWAYPGKKLLFMGCEFAQGREWNHDASLDWHLLDEPEGWHRGVQALVRDLNHYYRQQPSLYQLDFQPQGFEWLVVDDRENSVFAFIRRDEQGNEVLVVSNFTPVPRYGYRIGINQPGGWREVMNTDSVHYNGSDQGNVGTIYSEEWGSHQRQHSLVLTIPPLATLYLVKEA.

Asp-403 functions as the Nucleophile in the catalytic mechanism. Glu-456 acts as the Proton donor in catalysis.

Belongs to the glycosyl hydrolase 13 family. GlgB subfamily. As to quaternary structure, monomer.

It catalyses the reaction Transfers a segment of a (1-&gt;4)-alpha-D-glucan chain to a primary hydroxy group in a similar glucan chain.. It participates in glycan biosynthesis; glycogen biosynthesis. Its function is as follows. Catalyzes the formation of the alpha-1,6-glucosidic linkages in glycogen by scission of a 1,4-alpha-linked oligosaccharide from growing alpha-1,4-glucan chains and the subsequent attachment of the oligosaccharide to the alpha-1,6 position. The chain is 1,4-alpha-glucan branching enzyme GlgB from Pectobacterium atrosepticum (strain SCRI 1043 / ATCC BAA-672) (Erwinia carotovora subsp. atroseptica).